The chain runs to 146 residues: Leghemoglobin 1 (146 aa).

The 145-residue stretch at 2 to 146 (GFTEKQEALV…LAAAIKKAMG (145 aa)) folds into the Globin domain. Nitrated tyrosine is present on Tyr29. Ser44 contributes to the heme b binding site. At Ser44 the chain carries Phosphoserine. His61 contributes to the O2 binding site. The heme b site is built by Lys64, His93, and Lys96. Position 134 is a nitrated tyrosine (Tyr134).

This sequence belongs to the plant globin family. In terms of assembly, monomer. Nitrated in effective nodules and particularly in hypoxic conditions; this mechanism may play a protective role in the symbiosis by buffering toxic peroxynitrite NO(2)(-). Nitration level decrease during nodule senescence. Post-translationally, phosphorylation at Ser-44 disrupts the molecular environment of its porphyrin ring oxygen binding pocket, thus leading to a reduced oxygen consumption and to the delivery of oxygen O(2) to symbiosomes. Root nodules.

It localises to the cytoplasm. It is found in the cytosol. Its subcellular location is the nucleus. Functionally, leghemoglobin that reversibly binds oxygen O(2) through a pentacoordinated heme iron. In root nodules, facilitates the diffusion of oxygen to the bacteroids while preventing the bacterial nitrogenase from being inactivated by buffering dioxygen, nitric oxide and carbon monoxide, and promoting the formation of reactive oxygen species (ROS, e.g. H(2)O(2)). This role is essential for symbiotic nitrogen fixation (SNF). This chain is Leghemoglobin 1, found in Medicago truncatula (Barrel medic).